The sequence spans 156 residues: ATP synthase subunit b', organellar chromatophore (156 aa).

The helical transmembrane segment at 23–43 threads the bilayer; the sequence is TLPLMAIQVVFLTFILNAIFF.

The protein belongs to the ATPase B chain family. As to quaternary structure, F-type ATPases have 2 components, F(1) - the catalytic core - and F(0) - the membrane proton channel. F(1) has five subunits: alpha(3), beta(3), gamma(1), delta(1), epsilon(1). F(0) has four main subunits: a(1), b(1), b'(1) and c(10-14). The alpha and beta chains form an alternating ring which encloses part of the gamma chain. F(1) is attached to F(0) by a central stalk formed by the gamma and epsilon chains, while a peripheral stalk is formed by the delta, b and b' chains.

The protein localises to the plastid. The protein resides in the organellar chromatophore thylakoid membrane. F(1)F(0) ATP synthase produces ATP from ADP in the presence of a proton or sodium gradient. F-type ATPases consist of two structural domains, F(1) containing the extramembraneous catalytic core and F(0) containing the membrane proton channel, linked together by a central stalk and a peripheral stalk. During catalysis, ATP synthesis in the catalytic domain of F(1) is coupled via a rotary mechanism of the central stalk subunits to proton translocation. Functionally, component of the F(0) channel, it forms part of the peripheral stalk, linking F(1) to F(0). The b'-subunit is a diverged and duplicated form of b found in plants and photosynthetic bacteria. The sequence is that of ATP synthase subunit b', organellar chromatophore from Paulinella chromatophora.